Consider the following 500-residue polypeptide: Cytochrome P450 monooxygenase ausI (500 aa).

Residues 8-28 traverse the membrane as a helical segment; sequence LALLGQPLVPGLMVVSAILYL. A heme-binding site is contributed by cysteine 440.

The protein belongs to the cytochrome P450 family. The cofactor is heme.

The protein resides in the membrane. It participates in secondary metabolite biosynthesis; terpenoid biosynthesis. Its function is as follows. Cytochrome P450 monooxygenase; part of the gene cluster B that mediates the biosynthesis of the fungal meroterpenoid acetoxydehydroaustin. The first step of the pathway is the synthesis of 3,5-dimethylorsellinic acid by the polyketide synthase ausA. 3,5-dimethylorsellinic acid is then prenylated by the polyprenyl transferase ausN. Further epoxidation by the FAD-dependent monooxygenase ausM and cyclization by the probable terpene cyclase ausL lead to the formation of protoaustinoid A. Protoaustinoid A is then oxidized to spiro-lactone preaustinoid A3 by the combined action of the FAD-binding monooxygenases ausB and ausC, and the dioxygenase ausE. Acid-catalyzed keto-rearrangement and ring contraction of the tetraketide portion of preaustinoid A3 by ausJ lead to the formation of preaustinoid A4. The aldo-keto reductase ausK, with the help of ausH, is involved in the next step by transforming preaustinoid A4 into isoaustinone which is in turn hydroxylated by the P450 monooxygenase ausI to form austinolide. The cytochrome P450 monooxygenase ausG then modifies austinolide to austinol. Austinol is further acetylated to austin by the O-acetyltransferase ausP, which spontaneously changes to dehydroaustin. The cytochrome P450 monooxygenase then converts dehydroaustin is into 7-dehydrodehydroaustin. The hydroxylation catalyzed by ausR permits the second O-acetyltransferase ausQ to add an additional acetyl group to the molecule, leading to the formation of acetoxydehydroaustin. Due to genetic rearrangements of the clusters and the subsequent loss of some enzymes, the end product of the Penicillium brasilianum austinoid biosynthesis clusters is acetoxydehydroaustin. The sequence is that of Cytochrome P450 monooxygenase ausI from Penicillium brasilianum.